Reading from the N-terminus, the 86-residue chain is Large ribosomal subunit protein bL31B (86 aa).

Belongs to the bacterial ribosomal protein bL31 family. Type B subfamily. As to quaternary structure, part of the 50S ribosomal subunit.

The protein is Large ribosomal subunit protein bL31B of Streptococcus agalactiae serotype III (strain NEM316).